We begin with the raw amino-acid sequence, 432 residues long: Glutamyl-tRNA reductase (432 aa).

Substrate is bound by residues 50–53, Ser-110, 115–117, and Gln-121; these read TCNR and ETQ. Cys-51 functions as the Nucleophile in the catalytic mechanism. 190 to 195 lines the NADP(+) pocket; sequence GAGEMG.

Belongs to the glutamyl-tRNA reductase family. In terms of assembly, homodimer.

The enzyme catalyses (S)-4-amino-5-oxopentanoate + tRNA(Glu) + NADP(+) = L-glutamyl-tRNA(Glu) + NADPH + H(+). The protein operates within porphyrin-containing compound metabolism; protoporphyrin-IX biosynthesis; 5-aminolevulinate from L-glutamyl-tRNA(Glu): step 1/2. Its function is as follows. Catalyzes the NADPH-dependent reduction of glutamyl-tRNA(Glu) to glutamate 1-semialdehyde (GSA). In Nitratiruptor sp. (strain SB155-2), this protein is Glutamyl-tRNA reductase.